Consider the following 126-residue polypeptide: Histone H2B type 1-N (126 aa).

The span at 1-12 shows a compositional bias: low complexity; the sequence is MPEPSKSAPAPK. A disordered region spans residues 1–36; sequence MPEPSKSAPAPKKGSKKAVTKAQKKDGKKRKRSRKE. N-acetylproline is present on proline 2. Position 3 is an ADP-ribosyl glutamic acid (glutamate 3). The residue at position 6 (lysine 6) is an N6-(2-hydroxyisobutyryl)lysine; alternate. Position 6 is an N6-(beta-hydroxybutyryl)lysine; alternate (lysine 6). Lysine 6 bears the N6-acetyllysine; alternate mark. The residue at position 6 (lysine 6) is an N6-butyryllysine; alternate. The residue at position 6 (lysine 6) is an N6-crotonyllysine; alternate. Lysine 6 is subject to N6-lactoyllysine; alternate. Lysine 6 is covalently cross-linked (Glycyl lysine isopeptide (Lys-Gly) (interchain with G-Cter in SUMO2); alternate). Position 7 is an ADP-ribosylserine (serine 7). N6-(beta-hydroxybutyryl)lysine; alternate is present on lysine 12. 2 positions are modified to N6-acetyllysine; alternate: lysine 12 and lysine 13. Residues lysine 12 and lysine 13 each carry the N6-crotonyllysine; alternate modification. Lysine 12 is modified (N6-lactoyllysine; alternate). Lysine 13 is modified (N6-(2-hydroxyisobutyryl)lysine; alternate). Serine 15 is modified (phosphoserine; by STK4/MST1). Residues lysine 16, lysine 17, lysine 21, and lysine 24 each carry the N6-acetyllysine; alternate modification. N6-crotonyllysine; alternate is present on residues lysine 16, lysine 17, lysine 21, and lysine 24. Lysine 16, lysine 17, lysine 21, and lysine 24 each carry N6-lactoyllysine; alternate. N6-(beta-hydroxybutyryl)lysine; alternate occurs at positions 17 and 21. Lysine 17 is modified (N6-glutaryllysine; alternate). N6-(2-hydroxyisobutyryl)lysine; alternate occurs at positions 21 and 24. Lysine 21 is subject to N6-butyryllysine; alternate. A Glycyl lysine isopeptide (Lys-Gly) (interchain with G-Cter in SUMO2); alternate cross-link involves residue lysine 21. Lysine 25 carries the post-translational modification N6-(2-hydroxyisobutyryl)lysine. Residue lysine 35 is modified to N6-(2-hydroxyisobutyryl)lysine; alternate. The residue at position 35 (lysine 35) is an N6-(beta-hydroxybutyryl)lysine; alternate. Position 35 is an N6-crotonyllysine; alternate (lysine 35). Residue lysine 35 is modified to N6-glutaryllysine; alternate. Residue lysine 35 is modified to N6-succinyllysine; alternate. A Glycyl lysine isopeptide (Lys-Gly) (interchain with G-Cter in ubiquitin); alternate cross-link involves residue lysine 35. The residue at position 36 (glutamate 36) is a PolyADP-ribosyl glutamic acid. At serine 37 the chain carries Phosphoserine; by AMPK. N6-(2-hydroxyisobutyryl)lysine; alternate occurs at positions 44, 47, and 58. N6-lactoyllysine; alternate is present on lysine 44. An N6-glutaryllysine; alternate mark is found at lysine 44 and lysine 47. N6-methyllysine; alternate is present on lysine 47. Lysine 58 bears the N6,N6-dimethyllysine; alternate mark. Arginine 80 bears the Dimethylated arginine mark. Lysine 86 bears the N6-(2-hydroxyisobutyryl)lysine; alternate mark. The residue at position 86 (lysine 86) is an N6-(beta-hydroxybutyryl)lysine; alternate. At lysine 86 the chain carries N6-acetyllysine; alternate. An N6-lactoyllysine; alternate modification is found at lysine 86. The residue at position 86 (lysine 86) is an N6,N6,N6-trimethyllysine; alternate. Omega-N-methylarginine is present on residues arginine 87 and arginine 93. The residue at position 109 (lysine 109) is an N6-(2-hydroxyisobutyryl)lysine; alternate. Lysine 109 carries the N6-lactoyllysine; alternate modification. N6-glutaryllysine; alternate is present on lysine 109. Lysine 109 bears the N6-methyllysine; alternate mark. O-linked (GlcNAc) serine glycosylation is present at serine 113. Threonine 116 carries the phosphothreonine modification. N6-(2-hydroxyisobutyryl)lysine; alternate is present on residues lysine 117 and lysine 121. Lysine 117 and lysine 121 each carry N6-(beta-hydroxybutyryl)lysine; alternate. An N6-lactoyllysine; alternate mark is found at lysine 117 and lysine 121. 2 positions are modified to N6-glutaryllysine; alternate: lysine 117 and lysine 121. An N6-succinyllysine; alternate mark is found at lysine 117 and lysine 121. Lysine 117 carries the post-translational modification N6-malonyllysine; alternate. Residue lysine 117 is modified to N6-methylated lysine; alternate. Lysine 121 participates in a covalent cross-link: Glycyl lysine isopeptide (Lys-Gly) (interchain with G-Cter in ubiquitin); alternate.

Belongs to the histone H2B family. The nucleosome is a histone octamer containing two molecules each of H2A, H2B, H3 and H4 assembled in one H3-H4 heterotetramer and two H2A-H2B heterodimers. The octamer wraps approximately 147 bp of DNA. In terms of processing, monoubiquitination at Lys-35 (H2BK34Ub) by the MSL1/MSL2 dimer is required for histone H3 'Lys-4' (H3K4me) and 'Lys-79' (H3K79me) methylation and transcription activation at specific gene loci, such as HOXA9 and MEIS1 loci. Similarly, monoubiquitination at Lys-121 (H2BK120Ub) by the RNF20/40 complex gives a specific tag for epigenetic transcriptional activation and is also prerequisite for histone H3 'Lys-4' and 'Lys-79' methylation. It also functions cooperatively with the FACT dimer to stimulate elongation by RNA polymerase II. H2BK120Ub also acts as a regulator of mRNA splicing: deubiquitination by USP49 is required for efficient cotranscriptional splicing of a large set of exons. Phosphorylation at Ser-37 (H2BS36ph) by AMPK in response to stress promotes transcription. Phosphorylated on Ser-15 (H2BS14ph) by STK4/MST1 during apoptosis; which facilitates apoptotic chromatin condensation. Also phosphorylated on Ser-15 in response to DNA double strand breaks (DSBs), and in correlation with somatic hypermutation and immunoglobulin class-switch recombination. Post-translationally, glcNAcylation at Ser-113 promotes monoubiquitination of Lys-121. It fluctuates in response to extracellular glucose, and associates with transcribed genes. In terms of processing, ADP-ribosylated by PARP1 or PARP2 on Ser-7 (H2BS6ADPr) in response to DNA damage. H2BS6ADPr promotes recruitment of CHD1L. Mono-ADP-ribosylated on Glu-3 (H2BE2ADPr) by PARP3 in response to single-strand breaks. Poly ADP-ribosylation on Glu-36 (H2BE35ADPr) by PARP1 regulates adipogenesis: it inhibits phosphorylation at Ser-37 (H2BS36ph), thereby blocking expression of pro-adipogenetic genes. Crotonylation (Kcr) is specifically present in male germ cells and marks testis-specific genes in post-meiotic cells, including X-linked genes that escape sex chromosome inactivation in haploid cells. Crotonylation marks active promoters and enhancers and confers resistance to transcriptional repressors. It is also associated with post-meiotically activated genes on autosomes. Post-translationally, lactylated in macrophages by EP300/P300 by using lactoyl-CoA directly derived from endogenous or exogenous lactate, leading to stimulates gene transcription.

Its subcellular location is the nucleus. The protein resides in the chromosome. Core component of nucleosome. Nucleosomes wrap and compact DNA into chromatin, limiting DNA accessibility to the cellular machineries which require DNA as a template. Histones thereby play a central role in transcription regulation, DNA repair, DNA replication and chromosomal stability. DNA accessibility is regulated via a complex set of post-translational modifications of histones, also called histone code, and nucleosome remodeling. The chain is Histone H2B type 1-N from Homo sapiens (Human).